A 439-amino-acid polypeptide reads, in one-letter code: Enolase (439 aa).

Substrate is bound by residues H157 and E166. The Proton donor role is filled by E209. 3 residues coordinate Mg(2+): D244, E297, and D324. Substrate-binding residues include E297 and D324. Residue K349 is the Proton acceptor of the active site. Residues 376–379 (SHRS) and K400 each bind substrate.

This sequence belongs to the enolase family. Homodimer. Requires Mg(2+) as cofactor.

Its subcellular location is the cytoplasm. It carries out the reaction (2R)-2-phosphoglycerate = phosphoenolpyruvate + H2O. The protein operates within carbohydrate degradation; glycolysis; pyruvate from D-glyceraldehyde 3-phosphate: step 4/5. The sequence is that of Enolase (ENOL) from Mastigamoeba balamuthi (Phreatamoeba balamuthi).